Consider the following 143-residue polypeptide: Small ribosomal subunit protein bS6 (143 aa).

A disordered region spans residues glycine 95 to alanine 143. Basic and acidic residues predominate over residues lysine 105–aspartate 121.

It belongs to the bacterial ribosomal protein bS6 family.

In terms of biological role, binds together with bS18 to 16S ribosomal RNA. The protein is Small ribosomal subunit protein bS6 of Xylella fastidiosa (strain M23).